A 127-amino-acid polypeptide reads, in one-letter code: Putative adhesin P1-like protein MPN_203 (127 aa).

Residues 70–90 form a disordered region; that stretch reads TENFTQPQPQPQALKTTTPVF.

It belongs to the adhesin P1 family.

This Mycoplasma pneumoniae (strain ATCC 29342 / M129 / Subtype 1) (Mycoplasmoides pneumoniae) protein is Putative adhesin P1-like protein MPN_203.